The following is a 185-amino-acid chain: MISAGDFRKGVTFVMDGHPYVVIDFQHVKPGKGAAFVRTKYKNLKTGSTREEAFNPSDKFPRAHIETKEMQYLYNDSDLYYFMDNETYEQVPLTLVEVEDAIKYLKENDSAIIKFYEGRPFQVEPPIFVELKVIETEPGVKGDTATNVTKAATVETGAIVYVPVFVNEGNIIKVDTRTGEYMSRV.

Belongs to the elongation factor P family.

Its subcellular location is the cytoplasm. It functions in the pathway protein biosynthesis; polypeptide chain elongation. Functionally, involved in peptide bond synthesis. Stimulates efficient translation and peptide-bond synthesis on native or reconstituted 70S ribosomes in vitro. Probably functions indirectly by altering the affinity of the ribosome for aminoacyl-tRNA, thus increasing their reactivity as acceptors for peptidyl transferase. This is Elongation factor P from Alkaliphilus metalliredigens (strain QYMF).